The chain runs to 343 residues: Dihydroorotase (343 aa).

2 residues coordinate Zn(2+): His13 and His15. Residues 15–17 (HLR) and Asn41 each bind substrate. Zn(2+)-binding residues include Lys99, His136, and His174. Lys99 is modified (N6-carboxylysine). Residue His136 participates in substrate binding. Leu219 serves as a coordination point for substrate. Residue Asp247 coordinates Zn(2+). Asp247 is an active-site residue. Substrate contacts are provided by His251 and Ala263.

This sequence belongs to the metallo-dependent hydrolases superfamily. DHOase family. Class II DHOase subfamily. As to quaternary structure, homodimer. Zn(2+) is required as a cofactor.

It carries out the reaction (S)-dihydroorotate + H2O = N-carbamoyl-L-aspartate + H(+). The protein operates within pyrimidine metabolism; UMP biosynthesis via de novo pathway; (S)-dihydroorotate from bicarbonate: step 3/3. Its function is as follows. Catalyzes the reversible cyclization of carbamoyl aspartate to dihydroorotate. The protein is Dihydroorotase of Shewanella baltica (strain OS223).